A 464-amino-acid chain; its full sequence is MTGFLRVFLVLSATLSGSWVTLTATAGLSSVAEHEDALLRHLFQGYQKWVRPVLNSSDIIKVYFGLKISQLVDVDEKNQLMTTNVWLKQEWTDQKLRWNPEEYGGINSIKVPSESLWLPDIVLFENADGRFEGSLMTKAIVKSSGTVSWTPPASYKSSCTMDVTFFPFDRQNCSMKFGSWTYDGTMVDLILINENVDRKDFFDNGEWEILNAKGMKGNRREGFYSYPFVTYSFVLRRLPLFYTLFLIIPCLGLSFLTVLVFYLPSDEGEKLSLSTSVLVSLTVFLLVIEEIIPSSSKVIPLIGEYLLFIMIFVTLSIIVTVFVINVHHRSSSTYHPMAPWVKRLFLQRLPRWLCMKDPMDRFSFPDGKESDTAVRGKVSGKRKQTPASDGERVLVAFLEKASESIRYISRHVKKEHFISQVVQDWKFVAQVLDRIFLWLFLIASVLGSILIFIPALKMWIHRFH.

The first 30 residues, 1–30, serve as a signal peptide directing secretion; the sequence is MTGFLRVFLVLSATLSGSWVTLTATAGLSS. The Extracellular segment spans residues 31–238; that stretch reads VAEHEDALLR…VTYSFVLRRL (208 aa). 2 N-linked (GlcNAc...) asparagine glycosylation sites follow: Asn-55 and Asn-172. An intrachain disulfide couples Cys-159 to Cys-173. 3 consecutive transmembrane segments (helical) span residues 239–263, 271–288, and 305–326; these read PLFY…VFYL, LSLS…LLVI, and YLLF…VINV. Residues 327–434 lie on the Cytoplasmic side of the membrane; it reads HHRSSSTYHP…WKFVAQVLDR (108 aa). Residues 435–453 form a helical membrane-spanning segment; that stretch reads IFLWLFLIASVLGSILIFI.

This sequence belongs to the ligand-gated ion channel (TC 1.A.9) family. Acetylcholine receptor (TC 1.A.9.1) subfamily. Beta-3/CHRNB3 sub-subfamily. As to quaternary structure, neuronal AChR seems to be composed of two different type of subunits: alpha and beta. CHRNB3/beta-3 subunit is only able to form functional nAChRs when co-assembled with another beta subunit. Participates in pentameric assemblies along with CHRNA4/alpha-4 and CHRNB2/beta-2 subunits and with CHRNA6/alpha-6 as well, forming stoichiometries such as (CHRNA3:CHRNB4)2:CHRNB3, (CHRNA4:CHRNB2)2:CHRNB3 or (CHRNA6:CHRNB2)2:CHRNB3.

The protein resides in the synaptic cell membrane. Its subcellular location is the cell membrane. It carries out the reaction Ca(2+)(in) = Ca(2+)(out). It catalyses the reaction K(+)(in) = K(+)(out). The enzyme catalyses Na(+)(in) = Na(+)(out). Its activity is regulated as follows. Activated by a myriad of ligands such as acetylcholine, cytisine, nicotine, choline and epibatidine. Component of neuronal acetylcholine receptors (nAChRs) that function as pentameric, ligand-gated cation channels with high calcium permeability among other activities. nAChRs are excitatory neurotrasnmitter receptors formed by a collection of nAChR subunits known to mediate synaptic transmission in the nervous system and the neuromuscular junction. Each nAchR subunit confers differential attributes to channel properties, including activation, deactivation and desensitization kinetics, pH sensitivity, cation permeability, and binding to allosteric modulators. Has an accessory rather than functional role and is only able to form functional nAChRs when co-assembled with another beta subunit. Participates in pentameric assemblies along with CHRNA3, CHRNA4, CHRNA6, CHRNB2 and CHRNB4. Modulates receptor assembly and increases receptor sensitivity to nicotine when associated with CHRNB2, CHRNA4 and/or CHRNA6 as well as CHRNA3 and CHRNB4. Seems to play a role in nicotine addiction. The protein is Neuronal acetylcholine receptor subunit beta-3 (Chrnb3) of Rattus norvegicus (Rat).